Reading from the N-terminus, the 190-residue chain is LIM domain-containing protein WLIM1 (190 aa).

N-acetylalanine is present on alanine 2. An LIM zinc-binding 1 domain is found at 8-68; sequence QKCMACDKTV…RPHFDQNFKR (61 aa). The tract at residues 74-98 is disordered; sequence KSFEGTPKIGKPDRPLEGERPAGTK. Positions 83-95 are enriched in basic and acidic residues; that stretch reads GKPDRPLEGERPA. The 61-residue stretch at 108-168 folds into the LIM zinc-binding 2 domain; the sequence is EKCVGCDKTV…KHHHIQLIKE (61 aa).

Interacts with F-actin. Expressed in roots, leaves, stems, flowers and siliques. Not detected in pollen.

Its subcellular location is the cytoplasm. The protein resides in the cytoskeleton. Functionally, binds to actin filaments and promotes cross-linking into thick bundles. Has an actin-stabilizing activity. The actin regulatory activities are not regulated by pH and [Ca(2+)]. This Arabidopsis thaliana (Mouse-ear cress) protein is LIM domain-containing protein WLIM1.